Here is a 247-residue protein sequence, read N- to C-terminus: Virulence plasmid protein pGP6-D (247 aa).

The protein belongs to the UPF0137 (pGP6-D) family.

This chain is Virulence plasmid protein pGP6-D, found in Chlamydia trachomatis.